A 911-amino-acid polypeptide reads, in one-letter code: General transcription factor 3C polypeptide 2 (911 aa).

Disordered regions lie at residues 34–187 and 205–297; these read LDVK…RRRA and ALPA…MAPN. Residues 35 to 46 are compositionally biased toward polar residues; it reads DVKTSSEMTSAE. Ser63 carries the phosphoserine modification. Basic and acidic residues predominate over residues 64 to 81; it reads PDQRRLPPEQESLSRLEQ. Residues 92–112 are compositionally biased toward basic residues; that stretch reads SKPRASKPGRKRGGRTRKGPK. Over residues 114–123 the composition is skewed to pro residues; the sequence is PQQPNPPSAP. Ser132, Ser165, Ser167, Ser220, and Ser260 each carry phosphoserine. Residues 253-262 are compositionally biased toward acidic residues; the sequence is EAEDVEESEG. Positions 263–275 are enriched in low complexity; the sequence is PSESSSEPEPAVP. WD repeat units lie at residues 465–521 and 552–593; these read CDNG…ALLA and SECG…PLQR. Residue Ser597 is modified to Phosphoserine. One copy of the WD 3 repeat lies at 611–651; it reads AHDQAVRTLQWCKANSHFLASAGSDRKIKFWDLRRPYEPIN. Residues 765 to 785 are disordered; that stretch reads SPEGPDHSSASSGVPNPPKAR. Residues 832 to 874 form a WD 4 repeat; it reads LQLEAIHKVRFSPNLDSYGWLVSGGQSGLVRIHFVRGLASPLG. A phosphoserine mark is found at Ser871, Ser892, and Ser893. The segment at 889–911 is disordered; sequence FQPSSPTRRPGFSPTSHRLLPTP. At Thr895 the chain carries Phosphothreonine. Ser901 carries the post-translational modification Phosphoserine.

As to quaternary structure, part of the TFIIIC subcomplex TFIIIC2, consisting of six subunits, GTF3C1, GTF3C2, GTF3C3, GTF3C4, GTF3C5 and GTF3C6.

Its subcellular location is the nucleus. Its function is as follows. Required for RNA polymerase III-mediated transcription. Component of TFIIIC that initiates transcription complex assembly on tRNA and is required for transcription of 5S rRNA and other stable nuclear and cytoplasmic RNAs. May play a direct role in stabilizing interactions of TFIIIC2 with TFIIIC1. This Pongo abelii (Sumatran orangutan) protein is General transcription factor 3C polypeptide 2 (GTF3C2).